We begin with the raw amino-acid sequence, 637 residues long: Putative pentatricopeptide repeat-containing protein At5g65820 (637 aa).

PPR repeat units follow at residues 146–180 (SIEVYKSMVKILSKMRQFGAVWGLIEEMRKENPQL), 182–216 (EPELFVVLVQRFASADMVKKAIEVLDEMPKFGFEP), 217–247 (DEYVFGCLLDALCKHGSVKDAAKLFEDMRMR), 251–285 (NLRYFTSLLYGWCRVGKMMEAKYVLVQMNEAGFEP), 286–320 (DIVDYTNLLSGYANAGKMADAYDLLRDMRRRGFEP), 321–355 (NANCYTVLIQALCKVDRMEEAMKVFVEMERYECEA), 356–390 (DVVTYTALVSGFCKWGKIDKCYIVLDDMIKKGLMP), 391–425 (SELTYMHIMVAHEKKESFEECLELMEKMRQIEYHP), 426–460 (DIGIYNVVIRLACKLGEVKEAVRLWNEMEENGLSP), 461–495 (GVDTFVIMINGLASQGCLLEASDHFKEMVTRGLFS), 498–532 (QYGTLKLLLNTVLKDKKLEMAKDVWSCITSKGACE), and 534–568 (NVLSWTIWIHALFSKGYEKEACSYCIEMIEMDFMP). Basic and acidic residues predominate over residues 616–630 (QDLTEKAKSKQDREG). Residues 616–637 (QDLTEKAKSKQDREGKKKQRSR) form a disordered region.

It belongs to the PPR family. P subfamily.

In Arabidopsis thaliana (Mouse-ear cress), this protein is Putative pentatricopeptide repeat-containing protein At5g65820.